Consider the following 484-residue polypeptide: Endoglucanase 9 (484 aa).

An N-terminal signal peptide occupies residues 1-21; it reads MTSLFFFVLLFSSLLISNGDA. Residue Asp77 is the Nucleophile of the active site. Active-site residues include His402, Asp453, and Glu462.

This sequence belongs to the glycosyl hydrolase 9 (cellulase E) family. Specifically expressed in root cap cells.

It localises to the secreted. Its subcellular location is the cell wall. It catalyses the reaction Endohydrolysis of (1-&gt;4)-beta-D-glucosidic linkages in cellulose, lichenin and cereal beta-D-glucans.. This chain is Endoglucanase 9 (CEL3), found in Arabidopsis thaliana (Mouse-ear cress).